A 221-amino-acid polypeptide reads, in one-letter code: Zingipain-2 (221 aa).

Disulfide bonds link C24-C65 and C58-C98. The active site involves C27. N99 and N156 each carry an N-linked (GlcNAc...) asparagine glycan. A disulfide bridge links C155 with C206. H161 is a catalytic residue.

This sequence belongs to the peptidase C1 family.

The enzyme catalyses Preferential cleavage of peptides with a proline residue at the P2 position.. Its function is as follows. Cysteine proteinase with a specific activity toward peptides with a proline residue at the P2 position. This is Zingipain-2 from Zingiber officinale (Ginger).